A 254-amino-acid chain; its full sequence is 5'/3'-nucleotidase SurE (254 aa).

Residues Asp9, Asp10, Ser40, and Asn93 each coordinate a divalent metal cation.

The protein belongs to the SurE nucleotidase family. Requires a divalent metal cation as cofactor.

It is found in the cytoplasm. It carries out the reaction a ribonucleoside 5'-phosphate + H2O = a ribonucleoside + phosphate. It catalyses the reaction a ribonucleoside 3'-phosphate + H2O = a ribonucleoside + phosphate. The catalysed reaction is [phosphate](n) + H2O = [phosphate](n-1) + phosphate + H(+). In terms of biological role, nucleotidase with a broad substrate specificity as it can dephosphorylate various ribo- and deoxyribonucleoside 5'-monophosphates and ribonucleoside 3'-monophosphates with highest affinity to 3'-AMP. Also hydrolyzes polyphosphate (exopolyphosphatase activity) with the preference for short-chain-length substrates (P20-25). Might be involved in the regulation of dNTP and NTP pools, and in the turnover of 3'-mononucleotides produced by numerous intracellular RNases (T1, T2, and F) during the degradation of various RNAs. The chain is 5'/3'-nucleotidase SurE from Yersinia pseudotuberculosis serotype O:1b (strain IP 31758).